The sequence spans 256 residues: Small ribosomal subunit protein eS1 (256 aa).

Positions 1–18 (MAVGKNKRLSKGKKGVKK) are enriched in basic residues. The segment at 1–21 (MAVGKNKRLSKGKKGVKKRTV) is disordered. Ala-2 is subject to N-acetylalanine; partial.

The protein belongs to the eukaryotic ribosomal protein eS1 family. In terms of assembly, component of the small ribosomal subunit. Mature ribosomes consist of a small (40S) and a large (60S) subunit. The 40S subunit contains about 33 different proteins and 1 molecule of RNA (18S). The 60S subunit contains about 49 different proteins and 3 molecules of RNA (25S, 5.8S and 5S).

The protein resides in the cytoplasm. The polypeptide is Small ribosomal subunit protein eS1 (rps1) (Aspergillus niger (strain ATCC MYA-4892 / CBS 513.88 / FGSC A1513)).